We begin with the raw amino-acid sequence, 321 residues long: Lipoyl synthase (321 aa).

Residues C68, C73, C79, C94, C98, C101, and S308 each contribute to the [4Fe-4S] cluster site. The Radical SAM core domain maps to 80–297 (FNHGTATFMI…KVIALELGFT (218 aa)).

It belongs to the radical SAM superfamily. Lipoyl synthase family. The cofactor is [4Fe-4S] cluster.

Its subcellular location is the cytoplasm. It catalyses the reaction [[Fe-S] cluster scaffold protein carrying a second [4Fe-4S](2+) cluster] + N(6)-octanoyl-L-lysyl-[protein] + 2 oxidized [2Fe-2S]-[ferredoxin] + 2 S-adenosyl-L-methionine + 4 H(+) = [[Fe-S] cluster scaffold protein] + N(6)-[(R)-dihydrolipoyl]-L-lysyl-[protein] + 4 Fe(3+) + 2 hydrogen sulfide + 2 5'-deoxyadenosine + 2 L-methionine + 2 reduced [2Fe-2S]-[ferredoxin]. It functions in the pathway protein modification; protein lipoylation via endogenous pathway; protein N(6)-(lipoyl)lysine from octanoyl-[acyl-carrier-protein]: step 2/2. In terms of biological role, catalyzes the radical-mediated insertion of two sulfur atoms into the C-6 and C-8 positions of the octanoyl moiety bound to the lipoyl domains of lipoate-dependent enzymes, thereby converting the octanoylated domains into lipoylated derivatives. The chain is Lipoyl synthase from Aliivibrio salmonicida (strain LFI1238) (Vibrio salmonicida (strain LFI1238)).